Consider the following 485-residue polypeptide: Heat stress transcription factor A-1d (485 aa).

Disordered regions lie at residues 1–34 and 126–149; these read MDVS…SSNA and RRKP…QNSS. Residues 35-129 mediate DNA binding; that stretch reads PPPFLSKTYD…LLQSITRRKP (95 aa). The span at 136–146 shows a compositional bias: low complexity; sequence GHQRSQHSNGQ. Residues 152 to 218 are hydrophobic repeat HR-A/B; that stretch reads ACVEVGKFGL…QLMSFLAKAV (67 aa). 2 disordered regions span residues 229–269 and 436–461; these read QQQN…GQIV and PVPD…DKTK. Positions 238-252 match the Bipartite nuclear localization signal motif; sequence NRRISDTSKKRRFKR. Polar residues predominate over residues 441 to 455; the sequence is MDSTPVDNETEQEQN. Positions 472 to 480 match the Nuclear export signal motif; sequence LLSPETLDL.

It belongs to the HSF family. Class A subfamily. In terms of assembly, homotrimer. Interacts with HSP90-2. Post-translationally, exhibits temperature-dependent phosphorylation.

The protein resides in the cytoplasm. It is found in the nucleus. Transcriptional regulator that specifically binds DNA sequence 5'-AGAAnnTTCT-3' known as heat shock promoter elements (HSE). The sequence is that of Heat stress transcription factor A-1d (HSFA1D) from Arabidopsis thaliana (Mouse-ear cress).